The chain runs to 132 residues: MNLSTAIISCLCIGVLSYENKFQFTGTVYCKSNAPWCVRIRVIEVDTLVDDGVASVDFCSNEVTQTYDIGGVQENDGLLDRNFELQMVVFHNCSRNTETVFKTGIWRIPLPKAPTVHAPIRQHLNLNTNNSQ.

This is an uncharacterized protein from Caenorhabditis elegans.